The primary structure comprises 130 residues: Large ribosomal subunit protein bL20 (130 aa).

This sequence belongs to the bacterial ribosomal protein bL20 family.

Functionally, binds directly to 23S ribosomal RNA and is necessary for the in vitro assembly process of the 50S ribosomal subunit. It is not involved in the protein synthesizing functions of that subunit. The sequence is that of Large ribosomal subunit protein bL20 from Salinispora tropica (strain ATCC BAA-916 / DSM 44818 / JCM 13857 / NBRC 105044 / CNB-440).